A 479-amino-acid polypeptide reads, in one-letter code: Ribulose bisphosphate carboxylase large chain 2 (479 aa).

The substrate site is built by N116 and T166. The active-site Proton acceptor is the K168. K170 provides a ligand contact to substrate. Mg(2+) contacts are provided by K194, D196, and E197. An N6-carboxylysine modification is found at K194. The active-site Proton acceptor is H287. Substrate contacts are provided by R288, H320, and S372.

The protein belongs to the RuBisCO large chain family. Type I subfamily. As to quaternary structure, heterohexadecamer of 8 large chains and 8 small chains. The cofactor is Mg(2+).

It carries out the reaction 2 (2R)-3-phosphoglycerate + 2 H(+) = D-ribulose 1,5-bisphosphate + CO2 + H2O. It catalyses the reaction D-ribulose 1,5-bisphosphate + O2 = 2-phosphoglycolate + (2R)-3-phosphoglycerate + 2 H(+). Its function is as follows. RuBisCO catalyzes two reactions: the carboxylation of D-ribulose 1,5-bisphosphate, the primary event in carbon dioxide fixation, as well as the oxidative fragmentation of the pentose substrate. Both reactions occur simultaneously and in competition at the same active site. The sequence is that of Ribulose bisphosphate carboxylase large chain 2 from Bradyrhizobium sp. (strain BTAi1 / ATCC BAA-1182).